Here is a 150-residue protein sequence, read N- to C-terminus: Large ribosomal subunit protein uL13 (150 aa).

A disordered region spans residues 129–150 (PEHPHSAQRPQTLQLNPAASSQ). The span at 136–150 (QRPQTLQLNPAASSQ) shows a compositional bias: polar residues.

This sequence belongs to the universal ribosomal protein uL13 family. As to quaternary structure, part of the 50S ribosomal subunit.

Its function is as follows. This protein is one of the early assembly proteins of the 50S ribosomal subunit, although it is not seen to bind rRNA by itself. It is important during the early stages of 50S assembly. The protein is Large ribosomal subunit protein uL13 of Prochlorococcus marinus (strain MIT 9303).